Here is a 298-residue protein sequence, read N- to C-terminus: L-xylulose reductase (298 aa).

NADP(+) contacts are provided by Ile-19, Asp-68, and Asn-103. Active-site proton donor residues include Ser-161, Ser-162, and Tyr-175. The NADP(+) site is built by Tyr-175, Lys-179, and Val-207. Residue Lys-179 is the Lowers pKa of active site Tyr of the active site.

Belongs to the short-chain dehydrogenases/reductases (SDR) family.

The enzyme catalyses xylitol + NADP(+) = L-xylulose + NADPH + H(+). It participates in carbohydrate degradation; L-arabinose degradation via L-arabinitol; D-xylulose 5-phosphate from L-arabinose (fungal route): step 3/5. L-xylulose reductase involved in the catabolism of L-arabinose through an oxidoreductive pathway. Catalyzes the NADPH-dependent reduction of L-xylulose. This Aspergillus niger (strain ATCC 1015 / CBS 113.46 / FGSC A1144 / LSHB Ac4 / NCTC 3858a / NRRL 328 / USDA 3528.7) protein is L-xylulose reductase.